A 116-amino-acid polypeptide reads, in one-letter code: Large ribosomal subunit protein bL19 (116 aa).

This sequence belongs to the bacterial ribosomal protein bL19 family.

Its function is as follows. This protein is located at the 30S-50S ribosomal subunit interface and may play a role in the structure and function of the aminoacyl-tRNA binding site. The chain is Large ribosomal subunit protein bL19 from Mycoplasmopsis agalactiae (strain NCTC 10123 / CIP 59.7 / PG2) (Mycoplasma agalactiae).